The primary structure comprises 515 residues: E3 ubiquitin-protein ligase RNF38 (515 aa).

Residues 57–71 carry the Bipartite nuclear localization signal 1 motif; sequence DSPSPKRQRLSHSVF. Residues 73–141 form a disordered region; the sequence is YTSASPAPSP…LSRHNSISQD (69 aa). The segment covering 89 to 104 has biased composition (polar residues); the sequence is MTSNRQPPSVRPSQHH. The short motif at 115 to 131 is the Bipartite nuclear localization signal 2 element; that stretch reads RNRRSPPVRRQRGRRDR. Residues 115 to 134 are compositionally biased toward basic residues; that stretch reads RNRRSPPVRRQRGRRDRLSR. The RING-type zinc-finger motif lies at 463–504; that stretch reads CVVCMCDFESRQLLRVLPCNHEFHAKCVDKWLKANRTCPICR.

As to expression, widely expressed with highest levels in testis.

It is found in the nucleus. The catalysed reaction is S-ubiquitinyl-[E2 ubiquitin-conjugating enzyme]-L-cysteine + [acceptor protein]-L-lysine = [E2 ubiquitin-conjugating enzyme]-L-cysteine + N(6)-ubiquitinyl-[acceptor protein]-L-lysine.. It functions in the pathway protein modification; protein ubiquitination. Its function is as follows. Acts as an E3 ubiquitin-protein ligase able to ubiquitinate p53/TP53 which promotes its relocalization to discrete foci associated with PML nuclear bodies. Exhibits preference for UBE2D2 as a E2 enzyme. The sequence is that of E3 ubiquitin-protein ligase RNF38 from Homo sapiens (Human).